We begin with the raw amino-acid sequence, 304 residues long: Small ribosomal subunit protein uS2 (304 aa).

At serine 2 the chain carries N-acetylserine. 2 laminin-binding regions span residues 161 to 180 (IPCN…MLAR) and 205 to 229 (RDPE…EFQG). [DE]-W-[ST] repeat units follow at residues 230 to 232 (EWS), 245 to 247 (DWS), 275 to 277 (DWS), 284 to 286 (DWS), and 302 to 304 (DWS). The tract at residues 242-304 (EVADWSEGVA…DWGGATSDWS (63 aa)) is laminin-binding. Positions 257–304 (IQQFPAGTPAPAPAVKTEDWSTQPATEDWSTAPTAQASDWGGATSDWS) are disordered. Over residues 276–293 (WSTQPATEDWSTAPTAQA) the composition is skewed to polar residues.

It belongs to the universal ribosomal protein uS2 family. As to quaternary structure, monomer (37LRP) and homodimer (67LR). Component of the small ribosomal subunit. Mature ribosomes consist of a small (40S) and a large (60S) subunit. The 40S subunit contains about 33 different proteins and 1 molecule of RNA (18S). The 60S subunit contains about 49 different proteins and 3 molecules of RNA (28S, 5.8S and 5S). Interacts with rps21. Interacts with several laminins including at least lamb1. Interacts with mdk. Post-translationally, acylated. Acylation may be a prerequisite for conversion of the monomeric 37 kDa laminin receptor precursor (37LRP) to the mature dimeric 67 kDa laminin receptor (67LR), and may provide a mechanism for membrane association. Cleaved by stromelysin-3 (ST3) at the cell surface. Cleavage by stromelysin-3 may be a mechanism to alter cell-extracellular matrix interactions.

The protein resides in the cell membrane. It localises to the cytoplasm. Its subcellular location is the nucleus. Required for the assembly and/or stability of the 40S ribosomal subunit. Required for the processing of the 20S rRNA-precursor to mature 18S rRNA in a late step of the maturation of 40S ribosomal subunits. Also functions as a cell surface receptor for laminin. Plays a role in cell adhesion to the basement membrane and in the consequent activation of signaling transduction pathways. May play a role in cell fate determination and tissue morphogenesis. This Sparus aurata (Gilthead sea bream) protein is Small ribosomal subunit protein uS2 (rpsa).